The following is a 246-amino-acid chain: Pyridoxine 5'-phosphate synthase (246 aa).

Asn-12 serves as a coordination point for 3-amino-2-oxopropyl phosphate. 14-15 (DH) contributes to the 1-deoxy-D-xylulose 5-phosphate binding site. Residue Arg-23 participates in 3-amino-2-oxopropyl phosphate binding. The active-site Proton acceptor is the His-48. Arg-50 and His-55 together coordinate 1-deoxy-D-xylulose 5-phosphate. Glu-75 (proton acceptor) is an active-site residue. Thr-105 lines the 1-deoxy-D-xylulose 5-phosphate pocket. The active-site Proton donor is the His-196. 3-amino-2-oxopropyl phosphate contacts are provided by residues Gly-197 and 218–219 (GH).

This sequence belongs to the PNP synthase family. Homooctamer; tetramer of dimers.

Its subcellular location is the cytoplasm. The enzyme catalyses 3-amino-2-oxopropyl phosphate + 1-deoxy-D-xylulose 5-phosphate = pyridoxine 5'-phosphate + phosphate + 2 H2O + H(+). Its pathway is cofactor biosynthesis; pyridoxine 5'-phosphate biosynthesis; pyridoxine 5'-phosphate from D-erythrose 4-phosphate: step 5/5. Its function is as follows. Catalyzes the complicated ring closure reaction between the two acyclic compounds 1-deoxy-D-xylulose-5-phosphate (DXP) and 3-amino-2-oxopropyl phosphate (1-amino-acetone-3-phosphate or AAP) to form pyridoxine 5'-phosphate (PNP) and inorganic phosphate. The chain is Pyridoxine 5'-phosphate synthase from Nitrosococcus oceani (strain ATCC 19707 / BCRC 17464 / JCM 30415 / NCIMB 11848 / C-107).